A 325-amino-acid polypeptide reads, in one-letter code: NADH-quinone oxidoreductase subunit H (325 aa).

The next 8 helical transmembrane spans lie at 11–31 (ILLS…CGAF), 81–101 (VIFT…FAIV), 114–134 (IGIL…LFAG), 154–174 (LSYE…AGSF), 186–206 (IWNV…GVAV), 237–257 (FFVG…TLFF), 265–285 (LPPF…FILI), and 304–324 (VCLP…LWQA).

The protein belongs to the complex I subunit 1 family. In terms of assembly, NDH-1 is composed of 13 different subunits. Subunits NuoA, H, J, K, L, M, N constitute the membrane sector of the complex.

Its subcellular location is the cell inner membrane. It carries out the reaction a quinone + NADH + 5 H(+)(in) = a quinol + NAD(+) + 4 H(+)(out). NDH-1 shuttles electrons from NADH, via FMN and iron-sulfur (Fe-S) centers, to quinones in the respiratory chain. The immediate electron acceptor for the enzyme in this species is believed to be ubiquinone. Couples the redox reaction to proton translocation (for every two electrons transferred, four hydrogen ions are translocated across the cytoplasmic membrane), and thus conserves the redox energy in a proton gradient. This subunit may bind ubiquinone. The protein is NADH-quinone oxidoreductase subunit H of Enterobacter sp. (strain 638).